The following is a 103-amino-acid chain: Ig kappa-b5 chain C region (103 aa).

Residues 5–99 (PTVLIFPPAP…GAGSVVQSFS (95 aa)) form the Ig-like domain. Cysteines 26 and 85 form a disulfide.

This chain is Ig kappa-b5 chain C region, found in Oryctolagus cuniculus (Rabbit).